A 709-amino-acid chain; its full sequence is MFEKPVVKSFQYGNHTVTLETGVMARQATAAVMASMDDTSVFVSVVAKKEAVAGQDFFPLTVNYQERTYAAGKIPGGFFKREGRPSEGETLTARLIDRPIRPLFPSAFKNEVQVIATVVSINPDVNPDMITMIATSAALSIAGVPFNGPIGAARVGHINGELVLNPSNTELANSKLDLVVSGTEAAVLMVESEADNLSEEEMLSAVVFGHDQQQVVIKAINEFAAEVATPSWNWEAPVVNAELKAQVAELAETRLSEAYQITEKMARYEQVGAIKSEVVAALLVQNEALDEREIRGMLGALEKNVVRSRIIAGHPRIDGREKDMVRALDVRTGVLPRTHGSALFTRGETQALVTATLGTQRDAQIIDSLMGEKKDHFLLHYNFPPYCVGETGFVGSPKRREIGHGKLAKRGIAAVMPSVEEFPYTVRVVSEITESNGSSSMASVCGTSLALMDAGVPIKASVAGIAMGLVKEGDDFVVLSDILGDEDHLGDMDFKVAGTNAGITALQMDIKIEGITKEIMQIALNQAQGARKHILTVMDEAISGAREDISQYAPRIHTMKISSDKIKDVIGKGGAVIRALCEETGTTIEIEDDGTIKIAATEGAAAKEAIRRIEEITAEVEVGKIYPGKVMRIVDFGAFVTVLGPKEGLVHISQIAEERIEKVADHLQVGQEVQTKVLEIDRQGRIRLSIKEATAELNPVAATEVKDAE.

Mg(2+) is bound by residues D487 and D493. Residues 554–613 (PRIHTMKISSDKIKDVIGKGGAVIRALCEETGTTIEIEDDGTIKIAATEGAAAKEAIRRI) enclose the KH domain. The region spanning 623-691 (GKIYPGKVMR…RQGRIRLSIK (69 aa)) is the S1 motif domain.

It belongs to the polyribonucleotide nucleotidyltransferase family. As to quaternary structure, component of the RNA degradosome, which is a multiprotein complex involved in RNA processing and mRNA degradation. It depends on Mg(2+) as a cofactor.

The protein resides in the cytoplasm. It carries out the reaction RNA(n+1) + phosphate = RNA(n) + a ribonucleoside 5'-diphosphate. Involved in mRNA degradation. Catalyzes the phosphorolysis of single-stranded polyribonucleotides processively in the 3'- to 5'-direction. The polypeptide is Polyribonucleotide nucleotidyltransferase (Aliivibrio salmonicida (strain LFI1238) (Vibrio salmonicida (strain LFI1238))).